The chain runs to 234 residues: Sugar fermentation stimulation protein A (234 aa).

Positions 201–220 form a DNA-binding region, H-T-H motif; sequence LLSEAQQRGVEILAYKAEIS.

Belongs to the SfsA family.

Binds to DNA non-specifically. Could be a regulatory factor involved in maltose metabolism. The protein is Sugar fermentation stimulation protein A of Shigella flexneri.